We begin with the raw amino-acid sequence, 586 residues long: Isocitrate dehydrogenase kinase/phosphatase (586 aa).

Residues 316–322 and Lys-337 each bind ATP; that span reads ARGDRGL. Asp-372 is an active-site residue.

This sequence belongs to the AceK family.

It localises to the cytoplasm. It carries out the reaction L-seryl-[isocitrate dehydrogenase] + ATP = O-phospho-L-seryl-[isocitrate dehydrogenase] + ADP + H(+). Functionally, bifunctional enzyme which can phosphorylate or dephosphorylate isocitrate dehydrogenase (IDH) on a specific serine residue. This is a regulatory mechanism which enables bacteria to bypass the Krebs cycle via the glyoxylate shunt in response to the source of carbon. When bacteria are grown on glucose, IDH is fully active and unphosphorylated, but when grown on acetate or ethanol, the activity of IDH declines drastically concomitant with its phosphorylation. The chain is Isocitrate dehydrogenase kinase/phosphatase from Anaeromyxobacter dehalogenans (strain 2CP-C).